Here is a 266-residue protein sequence, read N- to C-terminus: Protein-ADP-ribose hydrolase (266 aa).

Positions 74 to 265 (TDLKDLKPIK…LYKEAFNRDA (192 aa)) constitute a Macro domain. ADP-D-ribose is bound by residues D93, I94, and N107. Zn(2+) is bound by residues C113, H118, and C120. ADP-D-ribose-binding residues include C120, I121, D122, S212, T213, G214, and F216.

This sequence belongs to the MacroD-type family. Zn-Macro subfamily. It depends on Zn(2+) as a cofactor.

It carries out the reaction 4-O-(ADP-D-ribosyl)-L-aspartyl-[protein] + H2O = L-aspartyl-[protein] + ADP-D-ribose + H(+). Functionally, ADP-ribosylhydrolase that specifically reverses the SirTM-mediated mono-ADP-ribosylation at an asparatate residue of GcvH-L, by releasing ADP-ribose from the target protein. May play a role in the regulation of the response to host-induced oxidative stress. In Staphylococcus aureus (strain MSSA476), this protein is Protein-ADP-ribose hydrolase.